A 391-amino-acid chain; its full sequence is Lysophosphatidylinositol acyltransferase 10 (391 aa).

Transmembrane regions (helical) follow at residues 10–30, 52–72, 97–119, 323–343, and 347–367; these read LLGW…NYII, AISY…GVRI, WMYM…KISL, LTSL…IFFV, and QLGF…YGGI.

Belongs to the 1-acyl-sn-glycerol-3-phosphate acyltransferase family. As to expression, expressed in seam cells, vulval epithelial cells and the major epithelial syncytium hyp7, and in several head neurons including AIY interneurons.

The protein resides in the endoplasmic reticulum membrane. It carries out the reaction a 2-acyl-sn-glycero-3-phospho-D-myo-inositol + an acyl-CoA = a 1,2-diacyl-sn-glycero-3-phospho-(1D-myo-inositol) + CoA. It catalyses the reaction a 2-acyl-sn-glycero-3-phospho-D-myo-inositol + octadecanoyl-CoA = 1-octadecanoyl-2-acyl-sn-glycero-3-phospho-1D-myo-inositol + CoA. It participates in phospholipid metabolism; phosphatidylinositol metabolism. Functionally, acyltransferase required for the fatty acid remodeling of phosphatidylinositol (1,2-diacyl-sn-glycero-3-phosphoinositol or PI). Mediates the conversion of lysophosphatidylinositol (2-acylglycerophosphatidylinositol or LPI) into PI (LPIAT activity). Has preference for saturated and mono-unsaturated fatty acids as acyl donors and sn-2-acyl lysoPI (2-acyl-sn-glycero-3-phospho-D-myo-inositol) as acyl acceptor. Contributes to the asymmetric cell division of epithelial cells. Asymmetric cell division is the fundamental mechanism by which multicellular organisms generate cell diversity. The protein is Lysophosphatidylinositol acyltransferase 10 of Caenorhabditis elegans.